The following is a 36-amino-acid chain: Histone H1-like protein EM5 (36 aa).

The H15 domain occupies 1 to 36 (MITAAVGALKERGGSSRQAILKYIQANFKVQANPAA).

It belongs to the histone H1/H5 family. As to expression, sperm.

Its subcellular location is the nucleus. The protein resides in the chromosome. This is Histone H1-like protein EM5 from Ensis minor (Razor shell).